The following is a 157-amino-acid chain: 2-C-methyl-D-erythritol 2,4-cyclodiphosphate synthase (157 aa).

2 residues coordinate a divalent metal cation: D8 and H10. Residues D8 to H10 and H34 to S35 each bind 4-CDP-2-C-methyl-D-erythritol 2-phosphate. H42 is an a divalent metal cation binding site. Residues D56–G58, F61–D65, A100–A106, T132–E135, F139, and R142 contribute to the 4-CDP-2-C-methyl-D-erythritol 2-phosphate site.

It belongs to the IspF family. In terms of assembly, homotrimer. Requires a divalent metal cation as cofactor.

It catalyses the reaction 4-CDP-2-C-methyl-D-erythritol 2-phosphate = 2-C-methyl-D-erythritol 2,4-cyclic diphosphate + CMP. It functions in the pathway isoprenoid biosynthesis; isopentenyl diphosphate biosynthesis via DXP pathway; isopentenyl diphosphate from 1-deoxy-D-xylulose 5-phosphate: step 4/6. In terms of biological role, involved in the biosynthesis of isopentenyl diphosphate (IPP) and dimethylallyl diphosphate (DMAPP), two major building blocks of isoprenoid compounds. Catalyzes the conversion of 4-diphosphocytidyl-2-C-methyl-D-erythritol 2-phosphate (CDP-ME2P) to 2-C-methyl-D-erythritol 2,4-cyclodiphosphate (ME-CPP) with a corresponding release of cytidine 5-monophosphate (CMP). In Pseudomonas aeruginosa (strain ATCC 15692 / DSM 22644 / CIP 104116 / JCM 14847 / LMG 12228 / 1C / PRS 101 / PAO1), this protein is 2-C-methyl-D-erythritol 2,4-cyclodiphosphate synthase.